We begin with the raw amino-acid sequence, 353 residues long: Quinolinate synthase (353 aa).

Iminosuccinate contacts are provided by His-47 and Ser-68. Cys-113 is a binding site for [4Fe-4S] cluster. Iminosuccinate is bound by residues 139–141 and Ser-156; that span reads YAN. Residue Cys-200 coordinates [4Fe-4S] cluster. Residues 226-228 and Thr-243 each bind iminosuccinate; that span reads HPE. Cys-297 contacts [4Fe-4S] cluster.

The protein belongs to the quinolinate synthase family. Type 1 subfamily. Requires [4Fe-4S] cluster as cofactor.

The protein resides in the cytoplasm. It carries out the reaction iminosuccinate + dihydroxyacetone phosphate = quinolinate + phosphate + 2 H2O + H(+). Its pathway is cofactor biosynthesis; NAD(+) biosynthesis; quinolinate from iminoaspartate: step 1/1. Its function is as follows. Catalyzes the condensation of iminoaspartate with dihydroxyacetone phosphate to form quinolinate. The chain is Quinolinate synthase from Vibrio cholerae serotype O1 (strain ATCC 39541 / Classical Ogawa 395 / O395).